A 178-amino-acid polypeptide reads, in one-letter code: uncharacterized protein (178 aa).

It localises to the mitochondrion. This is an uncharacterized protein from Paramecium tetraurelia.